The chain runs to 298 residues: Transcription factor RHD6 (298 aa).

Disordered regions lie at residues 1–58 and 157–213; these read MALV…SDHQ and TGSR…AKNR. Low complexity predominate over residues 15 to 27; it reads SKQNSSSSEDLSS. Composition is skewed to polar residues over residues 157 to 168 and 177 to 190; these read TGSRNESLSPKS and GEST…SSGV. Residues 191 to 205 show a composition bias toward low complexity; that stretch reads TGKTKPKPTTSPKDP. Positions 201-214 are basic motif; sequence SPKDPQSLAAKNRR. The region spanning 201 to 250 is the bHLH domain; sequence SPKDPQSLAAKNRRERISERLKILQELVPNGTKVDLVTMLEKAISYVKFL. A helix-loop-helix motif region spans residues 215–250; that stretch reads ERISERLKILQELVPNGTKVDLVTMLEKAISYVKFL.

In terms of assembly, homodimer. Forms heterodimers with RSL1. Interacts with TIFY10B/JAZ2, TIFY6A/JAZ4, TIFY5A/JAZ8, TIFY7/JAZ9 and TIFY9/JAZ10. In terms of tissue distribution, expressed constitutively in flowers. Expressed in root epidermal hair cells.

It is found in the nucleus. Its function is as follows. Transcription factor that is specifically required for the development of root hairs. Acts with RSL1 to positively regulate root hair development. Acts downstream of genes that regulate epidermal pattern formation, such as GL2. Targets directly RSL4, another transcription factor involved in the regulation of root hair elongation. Acts with RSL1 as transcription factor that integrates a jasmonate (JA) signaling pathway that stimulates root hair growth. This chain is Transcription factor RHD6, found in Arabidopsis thaliana (Mouse-ear cress).